The following is a 687-amino-acid chain: Acetyl-coenzyme A synthetase 2 (687 aa).

CoA contacts are provided by residues 206 to 209 (RGGK) and T325. Residues 401-403 (GEP), 425-430 (DTMWQT), D516, and R531 contribute to the ATP site. S539 contacts CoA. R542 serves as a coordination point for ATP. R617 is a CoA binding site.

This sequence belongs to the ATP-dependent AMP-binding enzyme family.

It catalyses the reaction acetate + ATP + CoA = acetyl-CoA + AMP + diphosphate. The protein is Acetyl-coenzyme A synthetase 2 (ACS2) of Eremothecium gossypii (strain ATCC 10895 / CBS 109.51 / FGSC 9923 / NRRL Y-1056) (Yeast).